Here is a 429-residue protein sequence, read N- to C-terminus: Threonine synthase (429 aa).

N6-(pyridoxal phosphate)lysine is present on Lys108.

Belongs to the threonine synthase family. Pyridoxal 5'-phosphate serves as cofactor.

It catalyses the reaction O-phospho-L-homoserine + H2O = L-threonine + phosphate. It participates in amino-acid biosynthesis; L-threonine biosynthesis; L-threonine from L-aspartate: step 5/5. Catalyzes the gamma-elimination of phosphate from L-phosphohomoserine and the beta-addition of water to produce L-threonine. The polypeptide is Threonine synthase (thrC) (Buchnera aphidicola subsp. Acyrthosiphon pisum (strain APS) (Acyrthosiphon pisum symbiotic bacterium)).